Consider the following 313-residue polypeptide: Myeloma-overexpressed gene protein (313 aa).

The disordered stretch occupies residues 107–129 (ERNKGDKGAQTGAGLSQEAEDVD).

The protein is Myeloma-overexpressed gene protein (MYEOV) of Homo sapiens (Human).